We begin with the raw amino-acid sequence, 262 residues long: Acyl-[acyl-carrier-protein]--UDP-N-acetylglucosamine O-acyltransferase (262 aa).

It belongs to the transferase hexapeptide repeat family. LpxA subfamily. In terms of assembly, homotrimer.

Its subcellular location is the cytoplasm. It catalyses the reaction a (3R)-hydroxyacyl-[ACP] + UDP-N-acetyl-alpha-D-glucosamine = a UDP-3-O-[(3R)-3-hydroxyacyl]-N-acetyl-alpha-D-glucosamine + holo-[ACP]. It participates in glycolipid biosynthesis; lipid IV(A) biosynthesis; lipid IV(A) from (3R)-3-hydroxytetradecanoyl-[acyl-carrier-protein] and UDP-N-acetyl-alpha-D-glucosamine: step 1/6. Involved in the biosynthesis of lipid A, a phosphorylated glycolipid that anchors the lipopolysaccharide to the outer membrane of the cell. The protein is Acyl-[acyl-carrier-protein]--UDP-N-acetylglucosamine O-acyltransferase of Campylobacter curvus (strain 525.92).